The chain runs to 140 residues: Granulocyte-macrophage colony-stimulating factor (140 aa).

Residues 1-17 (MWLQNLLLLGTVVCSIC) form the signal peptide. O-linked (GalNAc...) serine glycosylation is present at serine 24. Residue threonine 27 is glycosylated (O-linked (GalNAc...) threonine). Asparagine 45, asparagine 55, and asparagine 87 each carry an N-linked (GlcNAc...) asparagine glycan. Disulfide bonds link cysteine 72-cysteine 114 and cysteine 106-cysteine 139.

Belongs to the GM-CSF family. As to quaternary structure, monomer. The signaling GM-CSF receptor complex is a dodecamer of two head-to-head hexamers of two alpha, two beta, and two ligand subunits.

The protein localises to the secreted. Cytokine that stimulates the growth and differentiation of hematopoietic precursor cells from various lineages, including granulocytes, macrophages, eosinophils and erythrocytes. In Cavia porcellus (Guinea pig), this protein is Granulocyte-macrophage colony-stimulating factor (CSF2).